Here is a 450-residue protein sequence, read N- to C-terminus: UDP-N-acetylmuramoylalanine--D-glutamate ligase (450 aa).

119–125 (GSNGKTT) lines the ATP pocket.

Belongs to the MurCDEF family.

The protein localises to the cytoplasm. It catalyses the reaction UDP-N-acetyl-alpha-D-muramoyl-L-alanine + D-glutamate + ATP = UDP-N-acetyl-alpha-D-muramoyl-L-alanyl-D-glutamate + ADP + phosphate + H(+). It participates in cell wall biogenesis; peptidoglycan biosynthesis. Its function is as follows. Cell wall formation. Catalyzes the addition of glutamate to the nucleotide precursor UDP-N-acetylmuramoyl-L-alanine (UMA). The polypeptide is UDP-N-acetylmuramoylalanine--D-glutamate ligase (Bacillus cereus (strain B4264)).